A 371-amino-acid polypeptide reads, in one-letter code: UDP-N-acetylglucosamine--N-acetylmuramyl-(pentapeptide) pyrophosphoryl-undecaprenol N-acetylglucosamine transferase (371 aa).

UDP-N-acetyl-alpha-D-glucosamine contacts are provided by residues T15–G17, N126, R169, S197, and Q298.

Belongs to the glycosyltransferase 28 family. MurG subfamily.

It localises to the cell inner membrane. It catalyses the reaction di-trans,octa-cis-undecaprenyl diphospho-N-acetyl-alpha-D-muramoyl-L-alanyl-D-glutamyl-meso-2,6-diaminopimeloyl-D-alanyl-D-alanine + UDP-N-acetyl-alpha-D-glucosamine = di-trans,octa-cis-undecaprenyl diphospho-[N-acetyl-alpha-D-glucosaminyl-(1-&gt;4)]-N-acetyl-alpha-D-muramoyl-L-alanyl-D-glutamyl-meso-2,6-diaminopimeloyl-D-alanyl-D-alanine + UDP + H(+). The protein operates within cell wall biogenesis; peptidoglycan biosynthesis. Functionally, cell wall formation. Catalyzes the transfer of a GlcNAc subunit on undecaprenyl-pyrophosphoryl-MurNAc-pentapeptide (lipid intermediate I) to form undecaprenyl-pyrophosphoryl-MurNAc-(pentapeptide)GlcNAc (lipid intermediate II). This Paramagnetospirillum magneticum (strain ATCC 700264 / AMB-1) (Magnetospirillum magneticum) protein is UDP-N-acetylglucosamine--N-acetylmuramyl-(pentapeptide) pyrophosphoryl-undecaprenol N-acetylglucosamine transferase.